The chain runs to 379 residues: Homoserine O-succinyltransferase (379 aa).

Positions 51-360 (NAVLICHALS…DAPQGHDAFL (310 aa)) constitute an AB hydrolase-1 domain. Ser-157 (nucleophile) is an active-site residue. Arg-227 is a substrate binding site. Catalysis depends on residues Asp-323 and His-356. Asp-357 contacts substrate.

Belongs to the AB hydrolase superfamily. MetX family. Homodimer.

The protein resides in the cytoplasm. The catalysed reaction is L-homoserine + succinyl-CoA = O-succinyl-L-homoserine + CoA. Its pathway is amino-acid biosynthesis; L-methionine biosynthesis via de novo pathway; O-succinyl-L-homoserine from L-homoserine: step 1/1. Its function is as follows. Transfers a succinyl group from succinyl-CoA to L-homoserine, forming succinyl-L-homoserine. The protein is Homoserine O-succinyltransferase of Ectopseudomonas mendocina (strain ymp) (Pseudomonas mendocina).